Here is a 329-residue protein sequence, read N- to C-terminus: Glycerol-3-phosphate dehydrogenase [NAD(P)+] (329 aa).

Trp-11 and Lys-101 together coordinate NADPH. The sn-glycerol 3-phosphate site is built by Lys-101, Gly-132, and Ser-134. Ala-136 contributes to the NADPH binding site. Residues Lys-188, Asp-241, Ser-251, Arg-252, and Asn-253 each coordinate sn-glycerol 3-phosphate. Lys-188 serves as the catalytic Proton acceptor. Arg-252 provides a ligand contact to NADPH. NADPH contacts are provided by Val-276 and Glu-278.

Belongs to the NAD-dependent glycerol-3-phosphate dehydrogenase family.

The protein localises to the cytoplasm. It carries out the reaction sn-glycerol 3-phosphate + NAD(+) = dihydroxyacetone phosphate + NADH + H(+). The enzyme catalyses sn-glycerol 3-phosphate + NADP(+) = dihydroxyacetone phosphate + NADPH + H(+). It participates in membrane lipid metabolism; glycerophospholipid metabolism. Its function is as follows. Catalyzes the reduction of the glycolytic intermediate dihydroxyacetone phosphate (DHAP) to sn-glycerol 3-phosphate (G3P), the key precursor for phospholipid synthesis. In Phytoplasma australiense, this protein is Glycerol-3-phosphate dehydrogenase [NAD(P)+].